The sequence spans 107 residues: Serine-rich and transmembrane domain-containing protein 1 (107 aa).

A helical transmembrane segment spans residues 43 to 63 (IYVSIFLSLLAFLLLLLIIAL).

It localises to the membrane. The sequence is that of Serine-rich and transmembrane domain-containing protein 1 (SERTM1) from Homo sapiens (Human).